Reading from the N-terminus, the 449-residue chain is Exodeoxyribonuclease 7 large subunit (449 aa).

The protein belongs to the XseA family. In terms of assembly, heterooligomer composed of large and small subunits.

The protein localises to the cytoplasm. The catalysed reaction is Exonucleolytic cleavage in either 5'- to 3'- or 3'- to 5'-direction to yield nucleoside 5'-phosphates.. In terms of biological role, bidirectionally degrades single-stranded DNA into large acid-insoluble oligonucleotides, which are then degraded further into small acid-soluble oligonucleotides. The sequence is that of Exodeoxyribonuclease 7 large subunit from Salmonella paratyphi B (strain ATCC BAA-1250 / SPB7).